A 169-amino-acid polypeptide reads, in one-letter code: Lipoprotein signal peptidase (169 aa).

Over 1-9 (MPDVDRFGR) the chain is Cytoplasmic. Residues 10-30 (LPWLWITVLVFVLDQVSKAFF) traverse the membrane as a helical segment. Residues 31 to 67 (QAELSMYQQIVVIPDLFSWTLAYNTGAAFSFLADSSG) lie on the Periplasmic side of the membrane. Residues 68–89 (WQRWLFALIAIVVSASLVVWLK) traverse the membrane as a helical segment. The Cytoplasmic segment spans residues 90–96 (RLKKGET). A helical transmembrane segment spans residues 97–118 (WLAIALALVLGGALGNLYDRMV). The Periplasmic segment spans residues 119–140 (LGHVVDFILVHWQNRWYFPAFN). Active-site residues include D124 and D143. The chain crosses the membrane as a helical span at residues 141-154 (LADSAITVGAVMLA). The Cytoplasmic segment spans residues 155 to 169 (LDMFRSKKSGEAAHG).

Belongs to the peptidase A8 family. As to quaternary structure, monomer in the crystal.

The protein resides in the cell inner membrane. It carries out the reaction Release of signal peptides from bacterial membrane prolipoproteins. Hydrolyzes -Xaa-Yaa-Zaa-|-(S,diacylglyceryl)Cys-, in which Xaa is hydrophobic (preferably Leu), and Yaa (Ala or Ser) and Zaa (Gly or Ala) have small, neutral side chains.. The protein operates within protein modification; lipoprotein biosynthesis (signal peptide cleavage). Inhibited by globomycin. In terms of biological role, this protein specifically catalyzes the removal of signal peptides from prolipoproteins. This Pseudomonas aeruginosa (strain ATCC 15692 / DSM 22644 / CIP 104116 / JCM 14847 / LMG 12228 / 1C / PRS 101 / PAO1) protein is Lipoprotein signal peptidase.